The chain runs to 418 residues: AP-3 complex subunit mu-1 (418 aa).

An MHD domain is found at 176–417; that stretch reads NNEAYFDVVE…VTKAGKFQVR (242 aa).

Belongs to the adaptor complexes medium subunit family. As to quaternary structure, adaptor protein complex 3 (AP-3) is a heterotetramer composed of two large adaptins (delta-type subunit AP3D1 and beta-type subunit AP3B1 or AP3B2), a medium adaptin (mu-type subunit AP3M1 or AP3M2) and a small adaptin (sigma-type subunit APS1 or AP3S2). Interacts with AGAP1. AP-3 associates with the BLOC-1 complex. In terms of assembly, (Microbial infection) Interacts with human respiratory virus (HRSV) matrix protein; this interaction plays an essential role in trafficking the matrix protein in host cells.

The protein resides in the golgi apparatus. The protein localises to the cytoplasmic vesicle membrane. Part of the AP-3 complex, an adaptor-related complex which is not clathrin-associated. The complex is associated with the Golgi region as well as more peripheral structures. It facilitates the budding of vesicles from the Golgi membrane and may be directly involved in trafficking to lysosomes. In concert with the BLOC-1 complex, AP-3 is required to target cargos into vesicles assembled at cell bodies for delivery into neurites and nerve terminals. The chain is AP-3 complex subunit mu-1 (AP3M1) from Homo sapiens (Human).